The sequence spans 324 residues: tRNA dimethylallyltransferase (324 aa).

Residue 17–24 participates in ATP binding; that stretch reads GPTASGKT. Position 19-24 (19-24) interacts with substrate; the sequence is TASGKT. Interaction with substrate tRNA stretches follow at residues 42-45, 166-170, and 251-256; these read DSAL, QRIQR, and RCVGYR.

The protein belongs to the IPP transferase family. Monomer. Requires Mg(2+) as cofactor.

It carries out the reaction adenosine(37) in tRNA + dimethylallyl diphosphate = N(6)-dimethylallyladenosine(37) in tRNA + diphosphate. Functionally, catalyzes the transfer of a dimethylallyl group onto the adenine at position 37 in tRNAs that read codons beginning with uridine, leading to the formation of N6-(dimethylallyl)adenosine (i(6)A). This is tRNA dimethylallyltransferase from Burkholderia pseudomallei (strain 668).